Reading from the N-terminus, the 215-residue chain is FGFR1 oncogene partner 2 homolog (215 aa).

A coiled-coil region spans residues 35–183 (LLNKRVEAMK…SGLRELLGIS (149 aa)).

The protein belongs to the SIKE family.

It is found in the cytoplasm. This is FGFR1 oncogene partner 2 homolog (fgfr1op2) from Danio rerio (Zebrafish).